A 1128-amino-acid chain; its full sequence is Major DNA-binding protein (1128 aa).

Positions Leu1104 to Val1128 are required for nuclear localization.

The protein belongs to the herpesviridae major DNA-binding protein family. In terms of assembly, homooligomers. Forms double-helical filaments necessary for the formation of replication compartments within the host nucleus. Interacts with the origin-binding protein. Interacts with the helicase primase complex; this interaction stimulates primer synthesis activity of the helicase-primase complex. Interacts with the DNA polymerase. Interacts with the alkaline exonuclease; this interaction increases its nuclease processivity.

The protein resides in the virion tegument. The protein localises to the host nucleus. Plays several crucial roles in viral infection. Participates in the opening of the viral DNA origin to initiate replication by interacting with the origin-binding protein. May disrupt loops, hairpins and other secondary structures present on ssDNA to reduce and eliminate pausing of viral DNA polymerase at specific sites during elongation. Promotes viral DNA recombination by performing strand-transfer, characterized by the ability to transfer a DNA strand from a linear duplex to a complementary single-stranded DNA circle. Can also catalyze the renaturation of complementary single strands. Additionally, reorganizes the host cell nucleus, leading to the formation of prereplicative sites and replication compartments. This process is driven by the protein which can form double-helical filaments in the absence of DNA. This chain is Major DNA-binding protein, found in Homo sapiens (Human).